The primary structure comprises 562 residues: Glutamate--tRNA ligase (562 aa).

A 'HIGH' region motif is present at residues 90–100 (PNPSGLLHIGH).

It belongs to the class-I aminoacyl-tRNA synthetase family. Glutamate--tRNA ligase type 2 subfamily.

The protein resides in the cytoplasm. It catalyses the reaction tRNA(Glu) + L-glutamate + ATP = L-glutamyl-tRNA(Glu) + AMP + diphosphate. Functionally, catalyzes the attachment of glutamate to tRNA(Glu) in a two-step reaction: glutamate is first activated by ATP to form Glu-AMP and then transferred to the acceptor end of tRNA(Glu). This chain is Glutamate--tRNA ligase, found in Nanoarchaeum equitans (strain Kin4-M).